The chain runs to 758 residues: Vitamin K-dependent gamma-carboxylase (758 aa).

Positions 1-21 (MAVSARSARTSPGSDKVQKDK) are disordered. Position 2 is an N-acetylalanine (Ala-2). The Cytoplasmic segment spans residues 2-60 (AVSARSARTSPGSDKVQKDKAELISGPRQDSLMGKLLGFEWTDLSSWRRLVTLLNRPTD). Residues 61–81 (PASLAVFRFLFGFLMVLDIPQ) traverse the membrane as a helical segment. Residues 82 to 113 (ERGLSSLDRKYLDGLDVCRFPLLDALRPLPLD) are Lumenal-facing. Residues Cys-99 and Cys-450 are joined by a disulfide bond. A helical transmembrane segment spans residues 114–134 (WMYLVYTIMFLGALGMMLGLC). Over 135–136 (YR) the chain is Cytoplasmic. A helical transmembrane segment spans residues 137 to 157 (ISCVLFLLPYWYVFLLDKTSW). Residues 158-292 (NNHSYLYGLL…VSYFHCMNSQ (135 aa)) are Lumenal-facing. Residues 293-313 (LFSIGMFSYVMLASSPLFCSP) form a helical membrane-spanning segment. Residues 314–361 (EWPRKLVSYCPQRLQELLPLKAAPQPSVSCVYKRSRGKSGQKPGLRHQ) lie on the Cytoplasmic side of the membrane. A helical transmembrane segment spans residues 362–382 (LGAAFTLLYLLEQLFLPYSHF). Residues 383–758 (LTQGYNNWTN…SNPDPVHSEF (376 aa)) are Lumenal-facing. The tract at residues 732-758 (GELSPSNMDSSHSNPPESNPDPVHSEF) is disordered. The segment covering 735-747 (SPSNMDSSHSNPP) has biased composition (polar residues).

It belongs to the vitamin K-dependent gamma-carboxylase family. In terms of assembly, monomer. May interact with CALU.

It is found in the endoplasmic reticulum membrane. The enzyme catalyses 4-carboxy-L-glutamyl-[protein] + 2,3-epoxyphylloquinone + H2O + H(+) = phylloquinol + L-glutamyl-[protein] + CO2 + O2. Mediates the vitamin K-dependent carboxylation of glutamate residues to calcium-binding gamma-carboxyglutamate (Gla) residues with the concomitant conversion of the reduced hydroquinone form of vitamin K to vitamin K epoxide. Catalyzes gamma-carboxylation of various proteins, such as blood coagulation factors (F2, F7, F9 and F10), osteocalcin (BGLAP) or matrix Gla protein (MGP). The protein is Vitamin K-dependent gamma-carboxylase (GGCX) of Pongo abelii (Sumatran orangutan).